The sequence spans 606 residues: MAVAGPAPGAGARPRLDLQFLQRFLQILKVLFPSWSSQNALMFLTLLCLTLLEQFVIYQVGLIPSQYYGVLGNKDLEGFKTLTFLAVMLIVLNSTLKSFDQFTCNLLYVSWRKDLTEHLHRLYFRGRAYYTLNVLRDDIDNPDQRISQDVERFCRQLSSMASKLIISPFTLVYYTYQCFQSTGWLGPVSIFGYFILGTVVNKTLMGPIVMKLVHQEKLEGDFRFKHMQIRVNAEPAAFYRAGHVEHMRTDRRLQRLLQTQRELMSKELWLYIGINTFDYLGSILSYVVIAIPIFSGVYGDLSPAELSTLVSKNAFVCIYLISCFTQLIDLSTTLSDVAGYTHRIGQLRETLLDMSLKSQDCEILGESEWGLDTPPGWPAAEPADTAFLLERVSISAPSSDKPLIKDLSLKISEGQSLLITGNTGTGKTSLLRVLGGLWTSTRGSVQMLTDFGPHGVLFLPQKPFFTDGTLREQVIYPLKEVYPDSGSADDERILRFLELAGLSNLVARTEGLDQQVDWNWYDVLSPGEMQRLSFARLFYLQPKYAVLDEATSALTEEVESELYRIGQQLGMTFISVGHRQSLEKFHSLVLKLCGGGRWELMRIKVE.

Residues 39 to 332 (NALMFLTLLC…CFTQLIDLST (294 aa)) enclose the ABC transmembrane type-1 domain. The next 5 helical transmembrane spans lie at 43 to 63 (FLTL…VGLI), 76 to 96 (LEGF…NSTL), 190 to 210 (IFGY…PIVM), 279 to 299 (YLGS…GVYG), and 314 to 334 (AFVC…STTL). The ABC transporter domain occupies 389 to 603 (LERVSISAPS…GGGRWELMRI (215 aa)). 421–428 (GNTGTGKT) lines the ATP pocket.

This sequence belongs to the ABC transporter superfamily. ABCD family. Peroxisomal fatty acyl CoA transporter (TC 3.A.1.203) subfamily. In terms of assembly, homodimer or heterodimer. Interacts with LMBRD1; this interaction induces the translocation of ABCD4 from the ER to the lysosome membrane. Interacts with LMBRD1 and MMACHC; this interaction ensures the transport of cobalamin from the lysosome to the cytosol. As to expression, ubiquitous.

The protein localises to the endoplasmic reticulum membrane. Its subcellular location is the lysosome membrane. It carries out the reaction an R-cob(III)alamin(out) + ATP + H2O = an R-cob(III)alamin(in) + ADP + phosphate + H(+). Functionally, lysosomal membrane protein that transports cobalamin (Vitamin B12) from the lysosomal lumen to the cytosol in an ATP-dependent manner. Targeted by LMBRD1 lysosomal chaperone from the endoplasmic reticulum to the lysosomal membrane. Then forms a complex with lysosomal chaperone LMBRD1 and cytosolic MMACHC to transport cobalamin across the lysosomal membrane. The polypeptide is Lysosomal cobalamin transporter ABCD4 (Homo sapiens (Human)).